We begin with the raw amino-acid sequence, 475 residues long: Pentatricopeptide repeat-containing protein At1g29710, mitochondrial (475 aa).

Residues 1–37 (MVRLWCGKLRLWKPYLALATQSRNSWFCSGGGAPSHH) constitute a mitochondrion transit peptide. PPR repeat units lie at residues 83–117 (AQNV…GYAM), 118–148 (DLIR…IIAL), 153–183 (DVGA…MPEW), 184–218 (NSGT…GNKP), 219–254 (NGEI…GIVP), and 255–285 (SMEH…MPME). Residues 350-380 (YFYSTFRPVDSSHPQMNIIYETLMSLRSQLK) are type E(+) motif. The tract at residues 381–475 (EMGYVPDTRY…NGVCRCNNLW (95 aa)) is type DYW motif.

It belongs to the PPR family. PCMP-H subfamily.

It localises to the mitochondrion. This chain is Pentatricopeptide repeat-containing protein At1g29710, mitochondrial (PCMP-H67), found in Arabidopsis thaliana (Mouse-ear cress).